A 1135-amino-acid chain; its full sequence is Retinoblastoma-like protein 2 (1135 aa).

Residues 1-43 (MASGGNQSPPPPPAAAASSEEEEEDGDAADRAQPAGSPSHQIQ) are disordered. Ser410 carries the post-translational modification Phosphoserine. Thr414 carries the post-translational modification Phosphothreonine. Positions 414–613 (TPVSTAAHSL…DRIRDNENRV (200 aa)) are domain A. Residues 414–1021 (TPVSTAAHSL…QAFAMKYSQA (608 aa)) form a pocket; binds E1A region. An O-linked (GlcNAc) serine glycan is attached at Ser417. Positions 614–824 (PTCEEVMPPQ…PGQPLTSSSI (211 aa)) are spacer. Residue Ser636 is modified to Phosphoserine. Thr639 carries the post-translational modification Phosphothreonine. A phosphoserine mark is found at Ser659, Ser669, Ser684, Ser942, Ser946, Ser960, Ser965, and Ser967. Composition is skewed to polar residues over residues 661 to 674 (TTLYDRYSSPTVST), 683 to 692 (DSPSEGSTSG), 935 to 950 (SGSSESRSHQNSPTEL), and 958 to 969 (DSSPVMRSNSTL). Disordered regions lie at residues 661–698 (TTLYDRYSSPTVSTTRRRLFENDSPSEGSTSGRIPPQP) and 930–994 (GKRR…VEEE). The interval 825-1021 (RPRKTSSLAL…QAFAMKYSQA (197 aa)) is domain B. At Thr968 the chain carries Phosphothreonine. The segment covering 971-981 (VPQPSSAPPTP) has biased composition (pro residues). Residues Ser975 and Ser976 each carry the phosphoserine modification. Thr980 is subject to Phosphothreonine. Ser1031, Ser1064, Ser1076, and Ser1108 each carry phosphoserine.

This sequence belongs to the retinoblastoma protein (RB) family. Interacts with AATF and RINT1. Component of the DREAM complex (also named LINC complex) at least composed of E2F4, E2F5, LIN9, LIN37, LIN52, LIN54, MYBL1, MYBL2, RBL1, RBL2, RBBP4, TFDP1 and TFDP2. The complex exists in quiescent cells where it represses cell cycle-dependent genes. It dissociates in S phase when LIN9, LIN37, LIN52 and LIN54 form a subcomplex that binds to MYBL2. Interacts with USP4. Interacts with KMT5B, KMT5C and USP4. Interacts with PML. Interacts with RBBP9. Interacts with CD53. Post-translationally, during G0 and early G1 phase of the cell cycle, phosphorylated on Ser-636 and on 5 sites within the domain B. Phosphorylation on Ser-669 in G1 leads to its ubiquitin-dependent proteolysis.

The protein localises to the nucleus. Functionally, key regulator of entry into cell division. Directly involved in heterochromatin formation by maintaining overall chromatin structure and, in particular, that of constitutive heterochromatin by stabilizing histone methylation. Recruits and targets histone methyltransferases KMT5B and KMT5C, leading to epigenetic transcriptional repression. Controls histone H4 'Lys-20' trimethylation. Probably acts as a transcription repressor by recruiting chromatin-modifying enzymes to promoters. Potent inhibitor of E2F-mediated trans-activation, associates preferentially with E2F5. Binds to cyclins A and E. Binds to and may be involved in the transforming capacity of the adenovirus E1A protein. May act as a tumor suppressor. This is Retinoblastoma-like protein 2 (Rbl2) from Mus musculus (Mouse).